Reading from the N-terminus, the 177-residue chain is ATP synthase subunit b (177 aa).

A helical transmembrane segment spans residues 35–55 (FFVVLAIFLIVLAVIGTFVVP).

This sequence belongs to the ATPase B chain family. As to quaternary structure, F-type ATPases have 2 components, F(1) - the catalytic core - and F(0) - the membrane proton channel. F(1) has five subunits: alpha(3), beta(3), gamma(1), delta(1), epsilon(1). F(0) has three main subunits: a(1), b(2) and c(10-14). The alpha and beta chains form an alternating ring which encloses part of the gamma chain. F(1) is attached to F(0) by a central stalk formed by the gamma and epsilon chains, while a peripheral stalk is formed by the delta and b chains.

The protein resides in the cell membrane. Its function is as follows. F(1)F(0) ATP synthase produces ATP from ADP in the presence of a proton or sodium gradient. F-type ATPases consist of two structural domains, F(1) containing the extramembraneous catalytic core and F(0) containing the membrane proton channel, linked together by a central stalk and a peripheral stalk. During catalysis, ATP synthesis in the catalytic domain of F(1) is coupled via a rotary mechanism of the central stalk subunits to proton translocation. Component of the F(0) channel, it forms part of the peripheral stalk, linking F(1) to F(0). This Mycobacteroides abscessus (strain ATCC 19977 / DSM 44196 / CCUG 20993 / CIP 104536 / JCM 13569 / NCTC 13031 / TMC 1543 / L948) (Mycobacterium abscessus) protein is ATP synthase subunit b.